Reading from the N-terminus, the 417-residue chain is MLEQMGKAAREASWHLAQLSTEQKNQALLVIADLLEQQEAIILAANEKDMVAARESNINAAMLDRLLLTSERLKAIADDVRQVCHLEDPVGQVIDGRLLDSGLRLERRRVPLGVVGVIYEARPNVTIDVASLCLKTGNAAILRGGKETHHTNQAVVAVIQQALETCAIPAAAIQAIDKPDRELVAKMLKMDEYIDMLIPRGGAGLHKLCREQSTIPVITGGIGVCHTFVDESADLDQALNVIINAKVQRPSACNSLETLLVHEAIAESFLPQLSDAMAAQKVTLHASQRAITALKKGRATVVDVTEADYCDEWLSLDLNVEVVNDLTAAIAHIRQYGTAHSDAILTQSISHADRFVRQVDSAAVYVNASTRFTDGGQFGLGAEVAVSTQKLHARGPMGLDALTTYKWIGYGDNTLRR.

The protein belongs to the gamma-glutamyl phosphate reductase family.

The protein resides in the cytoplasm. The catalysed reaction is L-glutamate 5-semialdehyde + phosphate + NADP(+) = L-glutamyl 5-phosphate + NADPH + H(+). It functions in the pathway amino-acid biosynthesis; L-proline biosynthesis; L-glutamate 5-semialdehyde from L-glutamate: step 2/2. Its function is as follows. Catalyzes the NADPH-dependent reduction of L-glutamate 5-phosphate into L-glutamate 5-semialdehyde and phosphate. The product spontaneously undergoes cyclization to form 1-pyrroline-5-carboxylate. The polypeptide is Gamma-glutamyl phosphate reductase (Proteus mirabilis (strain HI4320)).